The following is a 560-amino-acid chain: Oxygen-dependent choline dehydrogenase (560 aa).

FAD is bound at residue 8-37; that stretch reads DYIIIGAGSAGNVLATRLTEDADVSVLLLE. Catalysis depends on histidine 475, which acts as the Proton acceptor.

This sequence belongs to the GMC oxidoreductase family. Requires FAD as cofactor.

The enzyme catalyses choline + A = betaine aldehyde + AH2. The catalysed reaction is betaine aldehyde + NAD(+) + H2O = glycine betaine + NADH + 2 H(+). It functions in the pathway amine and polyamine biosynthesis; betaine biosynthesis via choline pathway; betaine aldehyde from choline (cytochrome c reductase route): step 1/1. In terms of biological role, involved in the biosynthesis of the osmoprotectant glycine betaine. Catalyzes the oxidation of choline to betaine aldehyde and betaine aldehyde to glycine betaine at the same rate. This chain is Oxygen-dependent choline dehydrogenase, found in Stenotrophomonas maltophilia (strain R551-3).